The chain runs to 595 residues: Tumor necrosis factor receptor superfamily member 8 (595 aa).

The N-terminal stretch at 1-18 (MRVLLAALGLLFLGALRA) is a signal peptide. The Extracellular segment spans residues 19 to 385 (FPQDRPFEDT…STGKPVLDAG (367 aa)). TNFR-Cys repeat units follow at residues 28-66 (TCHG…TDCR), 68-106 (QCEP…SRVC), and 107-150 (ECRP…TVCE). 8 disulfide bridges follow: cysteine 29–cysteine 44, cysteine 45–cysteine 58, cysteine 48–cysteine 65, cysteine 69–cysteine 81, cysteine 84–cysteine 98, cysteine 87–cysteine 106, cysteine 108–cysteine 122, and cysteine 131–cysteine 149. Asparagine 32 is a glycosylation site (N-linked (GlcNAc...) asparagine). Asparagine 101 carries N-linked (GlcNAc...) asparagine glycosylation. A disordered region spans residues 167–238 (KEPSSGTIPQ…PTQPCPEGSG (72 aa)). A compositionally biased stretch (low complexity) spans 179–194 (PTPVSPATSSASTMPV). TNFR-Cys repeat units follow at residues 205 to 241 (ASKL…GDCR), 243 to 281 (QCEP…SRTC), and 282 to 325 (ECRP…TTFE). Disulfide bonds link cysteine 233–cysteine 240, cysteine 244–cysteine 256, cysteine 259–cysteine 273, cysteine 262–cysteine 281, cysteine 283–cysteine 297, and cysteine 289–cysteine 300. A glycan (N-linked (GlcNAc...) asparagine) is linked at asparagine 276. The disordered stretch occupies residues 323 to 355 (TFEAPPLGTQPDCNPTPENGEAPASTSPTQSLL). Asparagine 336 carries N-linked (GlcNAc...) asparagine glycosylation. Over residues 346–355 (ASTSPTQSLL) the composition is skewed to polar residues. Residues 386–406 (PVLFWVILVLVVVVGSSAFLL) form a helical membrane-spanning segment. Over 407-595 (CHRRACRKRI…DPLPTAASGK (189 aa)) the chain is Cytoplasmic. A phosphoserine mark is found at serine 438 and serine 452. Disordered regions lie at residues 438-457 (SRPR…TEPV), 485-509 (LQDA…STEH), and 536-595 (EGRG…ASGK). Residues 443–452 (SSTQLRSGAS) are compositionally biased toward polar residues. The segment covering 499-509 (DLPEPRVSTEH) has biased composition (basic and acidic residues).

Belongs to the TNFR8 family. As to quaternary structure, interacts with TRAF1, TRAF2, TRAF3 and TRAF5. Phosphorylated on serine and tyrosine residues. Isoform 2 is constitutively phosphorylated. As to expression, detected in alveolar macrophages (at protein level).

It is found in the cell membrane. Its subcellular location is the cytoplasm. Receptor for TNFSF8/CD30L. May play a role in the regulation of cellular growth and transformation of activated lymphoblasts. Regulates gene expression through activation of NF-kappa-B. This chain is Tumor necrosis factor receptor superfamily member 8, found in Homo sapiens (Human).